Reading from the N-terminus, the 485-residue chain is Adenosylhomocysteinase (485 aa).

Substrate is bound by residues threonine 64, aspartate 139, and glutamate 205. An NAD(+)-binding site is contributed by 206-208 (TTT). Substrate-binding residues include lysine 235 and aspartate 239. Residues asparagine 240, 269-274 (GYGDVG), glutamate 292, asparagine 327, 348-350 (IGH), and asparagine 397 contribute to the NAD(+) site.

It belongs to the adenosylhomocysteinase family. Homotetramer. NAD(+) serves as cofactor. In terms of tissue distribution, mainly in floral buds and stems.

The enzyme catalyses S-adenosyl-L-homocysteine + H2O = L-homocysteine + adenosine. Its pathway is amino-acid biosynthesis; L-homocysteine biosynthesis; L-homocysteine from S-adenosyl-L-homocysteine: step 1/1. Functionally, adenosylhomocysteine is a competitive inhibitor of S-adenosyl-L-methionine-dependent methyl transferase reactions; therefore adenosylhomocysteinase may play a key role in the control of methylations via regulation of the intracellular concentration of adenosylhomocysteine. The polypeptide is Adenosylhomocysteinase (SAHH) (Petroselinum crispum (Parsley)).